A 116-amino-acid chain; its full sequence is Protein Rev (116 aa).

Serine 5 and serine 8 each carry phosphoserine; by host CK2. Residues 18 to 26 (CIKILYQSN) are homomultimerization. The disordered stretch occupies residues 27–47 (PYPKPEGTRQARRNRRRRWRA). The short motif at 34–50 (TRQARRNRRRRWRARQR) is the Nuclear localization signal and RNA-binding (RRE) element. A compositionally biased stretch (basic residues) spans 36 to 47 (QARRNRRRRWRA). The Nuclear export signal and binding to XPO1 motif lies at 73–84 (LQLPPLERLHIN). The disordered stretch occupies residues 87–116 (EDCGQGPEEGVGSSQISGESHAVLESGTKE). Serine 99 carries the post-translational modification Phosphoserine; by host.

The protein belongs to the HIV-1 REV protein family. Homomultimer; when bound to the RRE. Multimeric assembly is essential for activity and may involve XPO1. Binds to human KPNB1, XPO1, TNPO1, RANBP5 and IPO7. Interacts with the viral Integrase. Interacts with human KHDRBS1. Interacts with human NAP1; this interaction decreases Rev multimerization and stimulates its activity. Interacts with human DEAD-box helicases DDX3 and DDX24; these interactions may serve for viral RNA export to the cytoplasm and packaging, respectively. Interacts with human PSIP1; this interaction may inhibit HIV-1 DNA integration by promoting dissociation of the Integrase-LEDGF/p75 complex. Post-translationally, asymmetrically arginine dimethylated at one site by host PRMT6. Methylation impairs the RNA-binding activity and export of viral RNA from the nucleus to the cytoplasm. Phosphorylated by protein kinase CK2. Presence of, and maybe binding to the N-terminus of the regulatory beta subunit of CK2 is necessary for CK2-mediated Rev's phosphorylation.

Its subcellular location is the host nucleus. The protein localises to the host nucleolus. It is found in the host cytoplasm. In terms of biological role, escorts unspliced or incompletely spliced viral pre-mRNAs (late transcripts) out of the nucleus of infected cells. These pre-mRNAs carry a recognition sequence called Rev responsive element (RRE) located in the env gene, that is not present in fully spliced viral mRNAs (early transcripts). This function is essential since most viral proteins are translated from unspliced or partially spliced pre-mRNAs which cannot exit the nucleus by the pathway used by fully processed cellular mRNAs. Rev itself is translated from a fully spliced mRNA that readily exits the nucleus. Rev's nuclear localization signal (NLS) binds directly to KPNB1/Importin beta-1 without previous binding to KPNA1/Importin alpha-1. KPNB1 binds to the GDP bound form of RAN (Ran-GDP) and targets Rev to the nucleus. In the nucleus, the conversion from Ran-GDP to Ran-GTP dissociates Rev from KPNB1 and allows Rev's binding to the RRE in viral pre-mRNAs. Rev multimerization on the RRE via cooperative assembly exposes its nuclear export signal (NES) to the surface. Rev can then form a complex with XPO1/CRM1 and Ran-GTP, leading to nuclear export of the complex. Conversion from Ran-GTP to Ran-GDP mediates dissociation of the Rev/RRE/XPO1/RAN complex, so that Rev can return to the nucleus for a subsequent round of export. Beside KPNB1, also seems to interact with TNPO1/Transportin-1, RANBP5/IPO5 and IPO7/RANBP7 for nuclear import. The nucleoporin-like HRB/RIP is an essential cofactor that probably indirectly interacts with Rev to release HIV RNAs from the perinuclear region to the cytoplasm. The sequence is that of Protein Rev from Human immunodeficiency virus type 1 group M subtype F1 (isolate VI850) (HIV-1).